The following is a 125-amino-acid chain: Large ribosomal subunit protein bL12 (125 aa).

The protein belongs to the bacterial ribosomal protein bL12 family. In terms of assembly, homodimer. Part of the ribosomal stalk of the 50S ribosomal subunit. Forms a multimeric L10(L12)X complex, where L10 forms an elongated spine to which 2 to 4 L12 dimers bind in a sequential fashion. Binds GTP-bound translation factors.

Its function is as follows. Forms part of the ribosomal stalk which helps the ribosome interact with GTP-bound translation factors. Is thus essential for accurate translation. This is Large ribosomal subunit protein bL12 from Nitrobacter winogradskyi (strain ATCC 25391 / DSM 10237 / CIP 104748 / NCIMB 11846 / Nb-255).